Here is a 382-residue protein sequence, read N- to C-terminus: Dual-specificity RNA methyltransferase RlmN (382 aa).

E96 (proton acceptor) is an active-site residue. The 241-residue stretch at Q102–D342 folds into the Radical SAM core domain. C109 and C345 form a disulfide bridge. Residues C116, C120, and C123 each coordinate [4Fe-4S] cluster. S-adenosyl-L-methionine-binding positions include G170–E171, S202, S224–H226, and N302. The active-site S-methylcysteine intermediate is C345.

This sequence belongs to the radical SAM superfamily. RlmN family. Requires [4Fe-4S] cluster as cofactor.

The protein localises to the cytoplasm. The enzyme catalyses adenosine(2503) in 23S rRNA + 2 reduced [2Fe-2S]-[ferredoxin] + 2 S-adenosyl-L-methionine = 2-methyladenosine(2503) in 23S rRNA + 5'-deoxyadenosine + L-methionine + 2 oxidized [2Fe-2S]-[ferredoxin] + S-adenosyl-L-homocysteine. The catalysed reaction is adenosine(37) in tRNA + 2 reduced [2Fe-2S]-[ferredoxin] + 2 S-adenosyl-L-methionine = 2-methyladenosine(37) in tRNA + 5'-deoxyadenosine + L-methionine + 2 oxidized [2Fe-2S]-[ferredoxin] + S-adenosyl-L-homocysteine. Its function is as follows. Specifically methylates position 2 of adenine 2503 in 23S rRNA and position 2 of adenine 37 in tRNAs. m2A2503 modification seems to play a crucial role in the proofreading step occurring at the peptidyl transferase center and thus would serve to optimize ribosomal fidelity. This Pseudomonas fluorescens (strain Pf0-1) protein is Dual-specificity RNA methyltransferase RlmN.